Here is a 371-residue protein sequence, read N- to C-terminus: Alanine dehydrogenase (371 aa).

Residues arginine 15 and lysine 75 each contribute to the substrate site. Histidine 96 acts as the Proton donor/acceptor in catalysis. NAD(+) is bound by residues serine 134, 178–179, aspartate 198, serine 220, 239–240, 267–270, arginine 279, and 298–301; these read TA, VL, IAID, and VANM. The active-site Proton donor/acceptor is the aspartate 270.

This sequence belongs to the AlaDH/PNT family. Homohexamer. Trimer of dimers.

The protein localises to the cytoplasm. It carries out the reaction L-alanine + NAD(+) + H2O = pyruvate + NH4(+) + NADH + H(+). It participates in amino-acid degradation; L-alanine degradation via dehydrogenase pathway; NH(3) and pyruvate from L-alanine: step 1/1. In terms of biological role, catalyzes the reversible reductive amination of pyruvate to L-alanine. Required for proficient utilization of D- or L-alanine as a nitrogen source. May be required for the adaptation from aerobic growth to anaerobic dormancy. It could be involved in the maintenance of the NAD pool during the shift to an anaerobic dormant state in which oxygen as a terminal electron acceptor becomes limiting. This Mycolicibacterium smegmatis (strain ATCC 700084 / mc(2)155) (Mycobacterium smegmatis) protein is Alanine dehydrogenase.